We begin with the raw amino-acid sequence, 344 residues long: Arginine N-succinyltransferase (344 aa).

Leu-125 contacts succinyl-CoA. His-229 (proton donor) is an active-site residue.

This sequence belongs to the arginine N-succinyltransferase family.

It catalyses the reaction succinyl-CoA + L-arginine = N(2)-succinyl-L-arginine + CoA + H(+). Its pathway is amino-acid degradation; L-arginine degradation via AST pathway; L-glutamate and succinate from L-arginine: step 1/5. Functionally, catalyzes the transfer of succinyl-CoA to arginine to produce N(2)-succinylarginine. The sequence is that of Arginine N-succinyltransferase from Escherichia coli O17:K52:H18 (strain UMN026 / ExPEC).